We begin with the raw amino-acid sequence, 86 residues long: Alpha-mammal toxin Ts3 (86 aa).

The first 19 residues, 1–19, serve as a signal peptide directing secretion; that stretch reads MNYFILLVVVCLLTAGTEG. In terms of domain architecture, LCN-type CS-alpha/beta spans 21–82; sequence KDGYPVEYDN…EPTKTNGKCK (62 aa). 4 disulfides stabilise this stretch: cysteine 31–cysteine 81, cysteine 35–cysteine 57, cysteine 43–cysteine 64, and cysteine 47–cysteine 66. Residue serine 83 is modified to Serine amide.

Expressed by the venom gland.

It is found in the secreted. Alpha toxins bind voltage-independently at site-3 of sodium channels (Nav) and inhibit the inactivation of the activated channels, thereby blocking neuronal transmission. This synthetic toxin inhibits inactivation of rat Nav1.4/SCN4A (when tested at 201 nM). In addition, it has been shown to cause a persistent sodium channel activation in nitrergic inhibitory fibers innervating the rabbit corpus cavernosum, resulting in NO release and cavernosal smooth muscle relaxation. This toxin is active against mammals. Its function is as follows. this synthetic peptide with a Ser at position 31 (C12S) acts as a bradykinin-potentiating peptide (BPP). Induces endothelium-dependent vasodilation that is reverted by NO synthase inhibitor, suggesting it activates molecular targets on vascular endothelium leading to NO production and vasodilation. It appears to induce vasodilation through muscarinic acetylcholine receptors (AChR) M2 (CHRM2) and M3 (CHRM3). Does not inhibit the angiotensin-converting enzyme (ACE). Does not act via bradykinin B2 receptor. The protein is Alpha-mammal toxin Ts3 of Tityus serrulatus (Brazilian scorpion).